The chain runs to 77 residues: Small ribosomal subunit protein uS17 (77 aa).

The protein belongs to the universal ribosomal protein uS17 family. Part of the 30S ribosomal subunit.

In terms of biological role, one of the primary rRNA binding proteins, it binds specifically to the 5'-end of 16S ribosomal RNA. The polypeptide is Small ribosomal subunit protein uS17 (Rickettsia akari (strain Hartford)).